We begin with the raw amino-acid sequence, 106 residues long: Photosystem II 5 kDa protein, chloroplastic (106 aa).

Residues 1 to 76 constitute a chloroplast transit peptide; that stretch reads MASITMMSSF…ACSVAKTAMA (76 aa). The cysteines at positions 95 and 104 are disulfide-linked.

Disulfide bond. Expressed in midvein, lamina and periphery of leaves (at protein level).

It is found in the plastid. Its subcellular location is the chloroplast thylakoid membrane. Functionally, may be a component of the oxygen-evolving complex. In Petunia hybrida (Petunia), this protein is Photosystem II 5 kDa protein, chloroplastic.